Consider the following 482-residue polypeptide: tRNA sulfurtransferase (482 aa).

The region spanning 61 to 165 (DLVRDALTRI…DDRLLLVRGR (105 aa)) is the THUMP domain. Residues 183–184 (LI), K265, G287, and Q296 each bind ATP. A disulfide bridge links C344 with C456. Residues 404–482 (LAEGDVVLDI…GYDNVRVYRP (79 aa)) enclose the Rhodanese domain. C456 (cysteine persulfide intermediate) is an active-site residue.

The protein belongs to the ThiI family.

The protein localises to the cytoplasm. It catalyses the reaction [ThiI sulfur-carrier protein]-S-sulfanyl-L-cysteine + a uridine in tRNA + 2 reduced [2Fe-2S]-[ferredoxin] + ATP + H(+) = [ThiI sulfur-carrier protein]-L-cysteine + a 4-thiouridine in tRNA + 2 oxidized [2Fe-2S]-[ferredoxin] + AMP + diphosphate. The enzyme catalyses [ThiS sulfur-carrier protein]-C-terminal Gly-Gly-AMP + S-sulfanyl-L-cysteinyl-[cysteine desulfurase] + AH2 = [ThiS sulfur-carrier protein]-C-terminal-Gly-aminoethanethioate + L-cysteinyl-[cysteine desulfurase] + A + AMP + 2 H(+). It functions in the pathway cofactor biosynthesis; thiamine diphosphate biosynthesis. Functionally, catalyzes the ATP-dependent transfer of a sulfur to tRNA to produce 4-thiouridine in position 8 of tRNAs, which functions as a near-UV photosensor. Also catalyzes the transfer of sulfur to the sulfur carrier protein ThiS, forming ThiS-thiocarboxylate. This is a step in the synthesis of thiazole, in the thiamine biosynthesis pathway. The sulfur is donated as persulfide by IscS. The sequence is that of tRNA sulfurtransferase from Edwardsiella ictaluri (strain 93-146).